The sequence spans 494 residues: Guanosine-5'-triphosphate,3'-diphosphate pyrophosphatase (494 aa).

It belongs to the GppA/Ppx family. GppA subfamily.

It catalyses the reaction guanosine 3'-diphosphate 5'-triphosphate + H2O = guanosine 3',5'-bis(diphosphate) + phosphate + H(+). It participates in purine metabolism; ppGpp biosynthesis; ppGpp from GTP: step 2/2. Its function is as follows. Catalyzes the conversion of pppGpp to ppGpp. Guanosine pentaphosphate (pppGpp) is a cytoplasmic signaling molecule which together with ppGpp controls the 'stringent response', an adaptive process that allows bacteria to respond to amino acid starvation, resulting in the coordinated regulation of numerous cellular activities. The chain is Guanosine-5'-triphosphate,3'-diphosphate pyrophosphatase from Erwinia tasmaniensis (strain DSM 17950 / CFBP 7177 / CIP 109463 / NCPPB 4357 / Et1/99).